We begin with the raw amino-acid sequence, 293 residues long: Phosphatidylserine decarboxylase proenzyme (293 aa).

Residues Asp88, His144, and Ser247 each act as charge relay system; for autoendoproteolytic cleavage activity in the active site. Ser247 functions as the Schiff-base intermediate with substrate; via pyruvic acid; for decarboxylase activity in the catalytic mechanism. Position 247 is a pyruvic acid (Ser); by autocatalysis (Ser247).

The protein belongs to the phosphatidylserine decarboxylase family. PSD-B subfamily. Prokaryotic type I sub-subfamily. Heterodimer of a large membrane-associated beta subunit and a small pyruvoyl-containing alpha subunit. Pyruvate is required as a cofactor. Is synthesized initially as an inactive proenzyme. Formation of the active enzyme involves a self-maturation process in which the active site pyruvoyl group is generated from an internal serine residue via an autocatalytic post-translational modification. Two non-identical subunits are generated from the proenzyme in this reaction, and the pyruvate is formed at the N-terminus of the alpha chain, which is derived from the carboxyl end of the proenzyme. The autoendoproteolytic cleavage occurs by a canonical serine protease mechanism, in which the side chain hydroxyl group of the serine supplies its oxygen atom to form the C-terminus of the beta chain, while the remainder of the serine residue undergoes an oxidative deamination to produce ammonia and the pyruvoyl prosthetic group on the alpha chain. During this reaction, the Ser that is part of the protease active site of the proenzyme becomes the pyruvoyl prosthetic group, which constitutes an essential element of the active site of the mature decarboxylase.

It is found in the cell membrane. The enzyme catalyses a 1,2-diacyl-sn-glycero-3-phospho-L-serine + H(+) = a 1,2-diacyl-sn-glycero-3-phosphoethanolamine + CO2. Its pathway is phospholipid metabolism; phosphatidylethanolamine biosynthesis; phosphatidylethanolamine from CDP-diacylglycerol: step 2/2. Catalyzes the formation of phosphatidylethanolamine (PtdEtn) from phosphatidylserine (PtdSer). The chain is Phosphatidylserine decarboxylase proenzyme from Xylella fastidiosa (strain M12).